Reading from the N-terminus, the 288-residue chain is Pyruvate synthase subunit PorB (288 aa).

Cysteine 16, cysteine 19, and cysteine 44 together coordinate [4Fe-4S] cluster. Positions 137–148 are enriched in polar residues; it reads STPYGASTTTSP. The disordered stretch occupies residues 137 to 159; that stretch reads STPYGASTTTSPHGKESFGEDRP. Over residues 149-159 the composition is skewed to basic and acidic residues; it reads HGKESFGEDRP. [4Fe-4S] cluster is bound at residue cysteine 208.

Heterotetramer of one alpha, one beta, one delta and one gamma chain. [4Fe-4S] cluster is required as a cofactor.

The catalysed reaction is 2 oxidized [2Fe-2S]-[ferredoxin] + pyruvate + CoA = 2 reduced [2Fe-2S]-[ferredoxin] + acetyl-CoA + CO2 + H(+). The chain is Pyruvate synthase subunit PorB (porB) from Methanothermobacter thermautotrophicus (strain ATCC 29096 / DSM 1053 / JCM 10044 / NBRC 100330 / Delta H) (Methanobacterium thermoautotrophicum).